The sequence spans 235 residues: Probable flavin-dependent thymidylate synthase (235 aa).

The ThyX domain occupies 1-229 (MKVQLIASTI…PNTYQDIPTE (229 aa)). Residues S70 and 93 to 95 (RHR) contribute to the FAD site. DUMP-binding positions include 90–93 (ELER), 103–105 (SQR), and R168. A ThyX motif motif is present at residues 93 to 103 (RHRHLSFSVVS). An FAD-binding site is contributed by 184-186 (NHR). DUMP is bound at residue R195. The active-site Involved in ionization of N3 of dUMP, leading to its activation is R195.

Belongs to the thymidylate synthase ThyX family. In terms of assembly, homotetramer. It depends on FAD as a cofactor.

It carries out the reaction dUMP + (6R)-5,10-methylene-5,6,7,8-tetrahydrofolate + NADPH + H(+) = dTMP + (6S)-5,6,7,8-tetrahydrofolate + NADP(+). It participates in pyrimidine metabolism; dTTP biosynthesis. Its function is as follows. Catalyzes the reductive methylation of 2'-deoxyuridine-5'-monophosphate (dUMP) to 2'-deoxythymidine-5'-monophosphate (dTMP) while utilizing 5,10-methylenetetrahydrofolate (mTHF) as the methyl donor, and NADPH and FADH(2) as the reductant. This is Probable flavin-dependent thymidylate synthase (48) from Mycobacterium (Mycobacteriophage D29).